Reading from the N-terminus, the 231-residue chain is Class A basic helix-loop-helix protein 9 (231 aa).

Positions alanine 61–leucine 113 constitute a bHLH domain. Residues glutamine 135–serine 168 form a disordered region. Residues alanine 137 to valine 149 are compositionally biased toward polar residues.

As to quaternary structure, heterodimer. Efficient DNA binding requires dimerization with another bHLH protein. Interacts with TCF3, TCF4, and TCF12.

Its subcellular location is the nucleus. In terms of biological role, transcription factor, which play a role in limb development. Is an essential player in the regulatory network governing transcription of genes implicated in limb morphogenesis. The chain is Class A basic helix-loop-helix protein 9 (Bhlha9) from Mus musculus (Mouse).